The primary structure comprises 384 residues: DNA dC-&gt;dU-editing enzyme APOBEC-3G (384 aa).

Residues 1–60 (MKPHFRNTVERMYRDTFSYNFYNRPILSRRNTVWLCYEVKTKGPSRPPLDAKIFRGQVYS) form an essential for cytoplasmic localization region. The region spanning 29–138 (RRNTVWLCYE…PDYQEALRSL (110 aa)) is the CMP/dCMP-type deaminase 1 domain. T32 carries the post-translational modification Phosphothreonine; by PKA. (Microbial infection) Glycyl lysine isopeptide (Lys-Gly) (interchain with G-Cter in ubiquitin) cross-links involve residues K42, K52, and K63. 3 residues coordinate Zn(2+): H65, C97, and C100. Residues K150 and K163 each participate in a (Microbial infection) Glycyl lysine isopeptide (Lys-Gly) (interchain with G-Cter in ubiquitin) cross-link. Residues 209–336 (EPWVRGRHET…TLAEAGAKIS (128 aa)) are necessary for homooligomerization. The interaction with DNA stretch occupies residues 213–215 (RGR). Positions 214–328 (GRHETYLCYE…GRCQEGLRTL (115 aa)) constitute a CMP/dCMP-type deaminase 2 domain. T218 carries the post-translational modification Phosphothreonine; by PKA and CAMK2. K249 participates in a covalent cross-link: (Microbial infection) Glycyl lysine isopeptide (Lys-Gly) (interchain with G-Cter in ubiquitin). Zn(2+) is bound at residue H257. The active-site Proton donor is the E259. K270 participates in a covalent cross-link: (Microbial infection) Glycyl lysine isopeptide (Lys-Gly) (interchain with G-Cter in ubiquitin). C288 and C291 together coordinate Zn(2+). Residues K297, K301, and K303 each participate in a (Microbial infection) Glycyl lysine isopeptide (Lys-Gly) (interchain with G-Cter in ubiquitin) cross-link. The interaction with DNA stretch occupies residues 313-320 (RIYDDQGR). A (Microbial infection) Glycyl lysine isopeptide (Lys-Gly) (interchain with G-Cter in ubiquitin) cross-link involves residue K334.

The protein belongs to the cytidine and deoxycytidylate deaminase family. As to quaternary structure, homodimer. Homooligomer. Can bind RNA to form ribonucleoprotein complexes of high-molecular-mass (HMM) or low-molecular-mass (LMM). HMM is inactive and heterogeneous in protein composition because of binding nonselectively to cellular RNAs, which in turn are associated with variety of cellular proteins. The LMM form which is enzymatically active has few or no RNAs associated. Its ability to form homooligomer is distinct from its ability to assemble into HMM. Interacts with APOBEC3B, APOBEC3F, MOV10, AGO2, EIF4E, EIF4ENIF1, DCP2 and DDX6 in an RNA-dependent manner. Interacts with AGO1, AGO3 and PKA/PRKACA. (Microbial infection) Interacts with HIV-1 Vif; promoting its ubiquitination by a cullin-5-RING E3 ubiquitin-protein ligase complex (ECS complex) hijacked by the HIV-1 Vif. In terms of assembly, (Microbial infection) Interacts with HIV-1 reverse transcriptase/ribonuclease H. As to quaternary structure, (Microbial infection) Interacts with hepatitis B virus capsid protein. Zn(2+) serves as cofactor. In terms of processing, (Microbial infection) Following infection by HIV-1, ubiquitinated by a cullin-5-RING E3 ubiquitin-protein ligase complex (ECS complex) hijacked by the HIV-1 Vif protein, leading to its degradation. Deubiquitinated by USP49; leading to stabilization. Phosphorylation at Thr-32 reduces its binding to HIV-1 Vif and subsequent ubiquitination and degradation thus promoting its antiviral activity. Expressed in spleen, testes, ovary and peripheral blood leukocytes and CD4+ lymphocytes. Also expressed in non-permissive peripheral blood mononuclear cells, and several tumor cell lines; no expression detected in permissive lymphoid and non-lymphoid cell lines. Exists only in the LMM form in peripheral blood-derived resting CD4 T-cells and monocytes, both of which are refractory to HIV-1 infection. LMM is converted to a HMM complex when resting CD4 T-cells are activated or when monocytes are induced to differentiate into macrophages. This change correlates with increased susceptibility of these cells to HIV-1 infection.

The protein resides in the cytoplasm. Its subcellular location is the nucleus. The protein localises to the P-body. The catalysed reaction is a 2'-deoxycytidine in single-stranded DNA + H2O + H(+) = a 2'-deoxyuridine in single-stranded DNA + NH4(+). With respect to regulation, (Microbial infection) Antiviral activity is neutralized by the HIV-1 virion infectivity factor (Vif), that prevents its incorporation into progeny virions by both inhibiting its translation and/or by inducing its ubiquitination and subsequent degradation by the 26S proteasome. Can also be neutralized by simian immunodeficiency virus sooty mangabey monkey virus (SIV-sm) and chimpanzee immunodeficiency virus (SIV-cpz) Vif. Its function is as follows. DNA deaminase (cytidine deaminase) which acts as an inhibitor of retrovirus replication and retrotransposon mobility via deaminase-dependent and -independent mechanisms. Exhibits potent antiviral activity against Vif-deficient HIV-1. After the penetration of retroviral nucleocapsids into target cells of infection and the initiation of reverse transcription, it can induce the conversion of cytosine to uracil in the minus-sense single-strand viral DNA, leading to G-to-A hypermutations in the subsequent plus-strand viral DNA. The resultant detrimental levels of mutations in the proviral genome, along with a deamination-independent mechanism that works prior to the proviral integration, together exert efficient antiretroviral effects in infected target cells. Selectively targets single-stranded DNA and does not deaminate double-stranded DNA or single- or double-stranded RNA. Exhibits antiviral activity also against simian immunodeficiency viruses (SIVs), hepatitis B virus (HBV), equine infectious anemia virus (EIAV), xenotropic MuLV-related virus (XMRV) and simian foamy virus (SFV). May inhibit the mobility of LTR and non-LTR retrotransposons. The sequence is that of DNA dC-&gt;dU-editing enzyme APOBEC-3G from Homo sapiens (Human).